A 293-amino-acid chain; its full sequence is uncharacterized protein (293 aa).

Disordered regions lie at residues 121 to 154 and 254 to 274; these read NLNF…SQNS and DILQ…PQQQ. Residues 133–149 are compositionally biased toward basic residues; sequence SYHHHSHSHSHHSHSHS. Pro residues predominate over residues 260–272; sequence PPSPTPTPPPPPQ.

This is an uncharacterized protein from Dictyostelium discoideum (Social amoeba).